The primary structure comprises 61 residues: Large ribosomal subunit protein bL28 (61 aa).

The tract at residues 1–26 is disordered; sequence MAKDFLNGKRTHFGNKRSHALNSSRR. The span at 9 to 19 shows a compositional bias: basic residues; that stretch reads KRTHFGNKRSH.

It belongs to the bacterial ribosomal protein bL28 family.

The protein is Large ribosomal subunit protein bL28 of Levilactobacillus brevis (strain ATCC 367 / BCRC 12310 / CIP 105137 / JCM 1170 / LMG 11437 / NCIMB 947 / NCTC 947) (Lactobacillus brevis).